A 455-amino-acid chain; its full sequence is Eukaryotic translation initiation factor 3 subunit E (455 aa).

Residues 256-425 enclose the PCI domain; that stretch reads TDLFFSPAYI…GTVIMNHPPQ (170 aa).

This sequence belongs to the eIF-3 subunit E family. Component of the eukaryotic translation initiation factor 3 (eIF-3) complex.

The protein resides in the cytoplasm. Its function is as follows. Component of the eukaryotic translation initiation factor 3 (eIF-3) complex, which is involved in protein synthesis of a specialized repertoire of mRNAs and, together with other initiation factors, stimulates binding of mRNA and methionyl-tRNAi to the 40S ribosome. The eIF-3 complex specifically targets and initiates translation of a subset of mRNAs involved in cell proliferation. In Neosartorya fischeri (strain ATCC 1020 / DSM 3700 / CBS 544.65 / FGSC A1164 / JCM 1740 / NRRL 181 / WB 181) (Aspergillus fischerianus), this protein is Eukaryotic translation initiation factor 3 subunit E (int6).